The sequence spans 103 residues: Small ribosomal subunit protein uS10 (103 aa).

This sequence belongs to the universal ribosomal protein uS10 family. Part of the 30S ribosomal subunit.

Its function is as follows. Involved in the binding of tRNA to the ribosomes. The polypeptide is Small ribosomal subunit protein uS10 (Chlorobium limicola (strain DSM 245 / NBRC 103803 / 6330)).